The chain runs to 85 residues: Cytochrome c6 (85 aa).

Heme c-binding residues include C14, C17, H18, and M58.

Belongs to the cytochrome c family. PetJ subfamily. Monomer. In terms of processing, binds 1 heme c group covalently per subunit.

It is found in the cellular thylakoid lumen. Its function is as follows. Functions as an electron carrier between membrane-bound cytochrome b6-f and photosystem I in oxygenic photosynthesis. In Leptolyngbya boryana (Plectonema boryanum), this protein is Cytochrome c6 (petJ).